The primary structure comprises 294 residues: Type I ribosome-inactivating protein trichoanguina (294 aa).

Residues 1 to 19 (MALSFFFLAISLGSPTAIG) form the signal peptide. An N-linked (GlcNAc...) asparagine glycan is attached at asparagine 70. Catalysis depends on residues glutamate 177 and arginine 180. An N-linked (GlcNAc...) asparagine glycan is attached at asparagine 220. The propeptide occupies 265 to 294 (VGSEYDIPTTILHPGAMGMLHNQNGNYVTM).

This sequence belongs to the ribosome-inactivating protein family. Type 1 RIP subfamily.

It catalyses the reaction Endohydrolysis of the N-glycosidic bond at one specific adenosine on the 28S rRNA.. In terms of biological role, inhibits protein synthesis by depurinating 28S rRNA in ribosomes. The sequence is that of Type I ribosome-inactivating protein trichoanguina (TCA) from Trichosanthes anguina (Snake gourd).